The following is a 252-amino-acid chain: Imidazole glycerol phosphate synthase subunit HisF (252 aa).

Residues Asp-11 and Asp-130 contribute to the active site.

This sequence belongs to the HisA/HisF family. Heterodimer of HisH and HisF.

The protein localises to the cytoplasm. The enzyme catalyses 5-[(5-phospho-1-deoxy-D-ribulos-1-ylimino)methylamino]-1-(5-phospho-beta-D-ribosyl)imidazole-4-carboxamide + L-glutamine = D-erythro-1-(imidazol-4-yl)glycerol 3-phosphate + 5-amino-1-(5-phospho-beta-D-ribosyl)imidazole-4-carboxamide + L-glutamate + H(+). Its pathway is amino-acid biosynthesis; L-histidine biosynthesis; L-histidine from 5-phospho-alpha-D-ribose 1-diphosphate: step 5/9. IGPS catalyzes the conversion of PRFAR and glutamine to IGP, AICAR and glutamate. The HisF subunit catalyzes the cyclization activity that produces IGP and AICAR from PRFAR using the ammonia provided by the HisH subunit. The chain is Imidazole glycerol phosphate synthase subunit HisF from Persephonella marina (strain DSM 14350 / EX-H1).